The sequence spans 310 residues: MYEIKQPFHSGYLQVSEIHQIYWEESGNPDGVPVIFLHGGPGAGASPECRGFFNPDVFRIVIIDQRGCGRSRPYACAEDNTTWDLVADIEKVREMLGIGKWLVFGGSWGSTLSLAYAQTHPERVKGLVLRGIFLCRPSETVWLNEAGGVSRIYPEQWQKFVAPIAENRRNQLIEAYHGLLFHQDEEVCLSAAKAWADWESYLIRFEPEEVDEDAYASLAIARLENHYFVNGGWLQGDRAILNNIGKIQHIPTIIVQGRYDLCTPMQSAWALSKAFPEAELRVVQAGHRAFDPPLVDALVQAVEDILPHLL.

The AB hydrolase-1 domain maps to 33-290; sequence PVIFLHGGPG…RVVQAGHRAF (258 aa). Catalysis depends on Ser107, which acts as the Nucleophile. The active site involves Asp260. His287 functions as the Proton donor in the catalytic mechanism.

It belongs to the peptidase S33 family.

It is found in the cytoplasm. The enzyme catalyses Release of N-terminal proline from a peptide.. Specifically catalyzes the removal of N-terminal proline residues from peptides. The chain is Proline iminopeptidase (pip) from Neisseria meningitidis serogroup A / serotype 4A (strain DSM 15465 / Z2491).